The chain runs to 607 residues: Glycerophosphodiester phosphodiesterase domain-containing protein 5 (607 aa).

Residues 1 to 42 (MVRHQPLQYYEPQLCLSCLTGIYGCRWKRYQRSHDDTTPWER) are Cytoplasmic-facing. Intrachain disulfides connect Cys15/Cys18 and Cys25/Cys571. A helical membrane pass occupies residues 43–63 (LWFLLLVCTFSLTLTWLYFWW). Over 64–89 (GVHNDYDEFNWYLYNRMGYWSDWSVP) the chain is Extracellular. A helical transmembrane segment spans residues 90 to 110 (ILVTSAAAFTYIAGLLVLALC). At 111–125 (HIAVGQQLNLHWIHK) the chain is on the cytoplasmic side. A helical transmembrane segment spans residues 126–146 (MGLVVILASTVVAMSAVAQLW). At 147–160 (EDEWEVLLISLQGT) the chain is on the extracellular side. The chain crosses the membrane as a helical span at residues 161–181 (APFLHIGALVAITALSWIVAG). The Cytoplasmic segment spans residues 182-192 (QFARAERSSSQ). The chain crosses the membrane as a helical span at residues 193 to 213 (LTILCTFFAVVFTFYLIPLTI). Residues 214–496 (SSPCIMEKKD…PLWIMPPDEY (283 aa)) lie on the Extracellular side of the membrane. The region spanning 228–485 (PALIGHRGAP…DNSHTLSRVP (258 aa)) is the GP-PDE domain. Residues Asn301, Asn336, Asn352, Asn374, and Asn448 are each glycosylated (N-linked (GlcNAc...) asparagine). The helical transmembrane segment at 497–517 (CLMWVTADLISFSLIIGIFVL) threads the bilayer. At 518–607 (QKWRLGGIRS…AKTVTEQSGH (90 aa)) the chain is on the cytoplasmic side. The tract at residues 582-607 (ANSTATPVGPRNAGSRAKTVTEQSGH) is disordered.

The protein belongs to the glycerophosphoryl diester phosphodiesterase family. In terms of assembly, interacts with PRDX1; forms a mixed-disulfide with PRDX1, leading to disrupt intramolecular disulfide bond between Cys-25 and Cys-571. Intramolecular disulfide bond between Cys-25 and Cys-571 is reduced by PRDX1. In terms of tissue distribution, detected in brain, lung, heart, kidney and testis.

Its subcellular location is the endomembrane system. It localises to the cytoplasm. The protein resides in the perinuclear region. The protein localises to the cell projection. It is found in the growth cone. It carries out the reaction a 1,2-diacyl-sn-glycero-3-phospho-(1D-myo-inositol-4,5-bisphosphate) + H2O = 1D-myo-inositol 1,4,5-trisphosphate + a 1,2-diacyl-sn-glycerol + H(+). The catalysed reaction is sn-glycerol 3-phosphocholine + H2O = sn-glycerol 3-phosphate + choline + H(+). Inhibited by high level of NaCl or urea. Functionally, glycerophosphodiester phosphodiesterase that promotes neurite formation and drives spinal motor neuron differentiation. Mediates the cleavage of glycosylphosphatidylinositol (GPI) anchor of target proteins: removes the GPI-anchor of RECK, leading to release RECK from the plasma membrane. May contribute to the osmotic regulation of cellular glycerophosphocholine. The polypeptide is Glycerophosphodiester phosphodiesterase domain-containing protein 5 (Mus musculus (Mouse)).